Here is a 57-residue protein sequence, read N- to C-terminus: Large ribosomal subunit protein bL32 (57 aa).

The segment at 1 to 20 (MAVQQRRSSKHRRDKRRSHD) is disordered. A compositionally biased stretch (basic residues) spans 7–18 (RSSKHRRDKRRS).

Belongs to the bacterial ribosomal protein bL32 family.

The polypeptide is Large ribosomal subunit protein bL32 (rpmF) (Mycoplasma genitalium (strain ATCC 33530 / DSM 19775 / NCTC 10195 / G37) (Mycoplasmoides genitalium)).